We begin with the raw amino-acid sequence, 443 residues long: Probable glycine dehydrogenase (decarboxylating) subunit 1 (443 aa).

It belongs to the GcvP family. N-terminal subunit subfamily. As to quaternary structure, the glycine cleavage system is composed of four proteins: P, T, L and H. In this organism, the P 'protein' is a heterodimer of two subunits.

The catalysed reaction is N(6)-[(R)-lipoyl]-L-lysyl-[glycine-cleavage complex H protein] + glycine + H(+) = N(6)-[(R)-S(8)-aminomethyldihydrolipoyl]-L-lysyl-[glycine-cleavage complex H protein] + CO2. The glycine cleavage system catalyzes the degradation of glycine. The P protein binds the alpha-amino group of glycine through its pyridoxal phosphate cofactor; CO(2) is released and the remaining methylamine moiety is then transferred to the lipoamide cofactor of the H protein. This Nitratidesulfovibrio vulgaris (strain ATCC 29579 / DSM 644 / CCUG 34227 / NCIMB 8303 / VKM B-1760 / Hildenborough) (Desulfovibrio vulgaris) protein is Probable glycine dehydrogenase (decarboxylating) subunit 1.